Here is a 305-residue protein sequence, read N- to C-terminus: 2-pyrone-4,6-dicarbaxylate hydrolase (305 aa).

Substrate contacts are provided by residues 32–34, tyrosine 50, threonine 78, arginine 125, arginine 131, tyrosine 158, and histidine 182; that span reads HCH. The Proton acceptor role is filled by aspartate 258. Asparagine 263 provides a ligand contact to substrate.

This sequence belongs to the metallo-dependent hydrolases superfamily. PDC hydrolase family.

It carries out the reaction 2-oxo-2H-pyran-4,6-dicarboxylate + H2O = (1E)-4-oxobut-1-ene-1,2,4-tricarboxylate + H(+). With respect to regulation, strongly inhibited by 1 mM Zn(2+), Cu(2+), Mn(2+) and Co(2+) ions. Also inhibited by 5,5'-dithiobis(2-nitrobenzoic acid) (Ellman reagent) in vitro. Functionally, involved in the degradation of aromatic compounds via the protocatechuate 4,5-cleavage pathway. Catalyzes the hydrolysis of 2-pyrone-4,6-dicarboxylate (PDC) to oxalomesaconate (OMA). Also catalyzes the reverse reaction. The chain is 2-pyrone-4,6-dicarbaxylate hydrolase from Comamonas testosteroni (Pseudomonas testosteroni).